Consider the following 346-residue polypeptide: tRNA N6-adenosine threonylcarbamoyltransferase (346 aa).

Residues H111 and H115 each coordinate Fe cation. Substrate-binding positions include 134-138 (LVSGG), D167, G180, and N279. D307 is a Fe cation binding site.

Belongs to the KAE1 / TsaD family. The cofactor is Fe(2+).

Its subcellular location is the cytoplasm. It catalyses the reaction L-threonylcarbamoyladenylate + adenosine(37) in tRNA = N(6)-L-threonylcarbamoyladenosine(37) in tRNA + AMP + H(+). Functionally, required for the formation of a threonylcarbamoyl group on adenosine at position 37 (t(6)A37) in tRNAs that read codons beginning with adenine. Is involved in the transfer of the threonylcarbamoyl moiety of threonylcarbamoyl-AMP (TC-AMP) to the N6 group of A37, together with TsaE and TsaB. TsaD likely plays a direct catalytic role in this reaction. This Burkholderia pseudomallei (strain K96243) protein is tRNA N6-adenosine threonylcarbamoyltransferase.